Here is a 465-residue protein sequence, read N- to C-terminus: Cysteine--tRNA ligase (465 aa).

Cysteine 30 contacts Zn(2+). The short motif at 32-42 (ITVYDYCHIGH) is the 'HIGH' region element. Zn(2+)-binding residues include cysteine 214, histidine 239, and glutamate 243. A 'KMSKS' region motif is present at residues 271-275 (KMSKS). Lysine 274 provides a ligand contact to ATP.

Belongs to the class-I aminoacyl-tRNA synthetase family. Monomer. Requires Zn(2+) as cofactor.

The protein resides in the cytoplasm. The catalysed reaction is tRNA(Cys) + L-cysteine + ATP = L-cysteinyl-tRNA(Cys) + AMP + diphosphate. The chain is Cysteine--tRNA ligase from Burkholderia thailandensis (strain ATCC 700388 / DSM 13276 / CCUG 48851 / CIP 106301 / E264).